Reading from the N-terminus, the 147-residue chain is Protein phosphatase 1 regulatory subunit 14A (147 aa).

Residues 1 to 11 are compositionally biased toward basic residues; sequence MAAQRLGKRVL. The segment at 1-36 is disordered; the sequence is MAAQRLGKRVLSKLQSPSRARGPGGSPSGLQKRHAR. A Phosphoserine modification is found at serine 26. An inhibitory region spans residues 35–120; that stretch reads ARVTVKYDRR…LLAKLRGLHK (86 aa). Threonine 38 is subject to Phosphothreonine; by PKC. A disordered region spans residues 118–147; the sequence is LHKQPGFPQPSPSDDPSLSPRQDRAHTAPP. 3 positions are modified to phosphoserine: serine 128, serine 134, and serine 136. Positions 138–147 are enriched in basic and acidic residues; the sequence is RQDRAHTAPP.

This sequence belongs to the PP1 inhibitor family.

It is found in the cytoplasm. Inhibitor of PPP1CA. Has over 1000-fold higher inhibitory activity when phosphorylated, creating a molecular switch for regulating the phosphorylation status of PPP1CA substrates and smooth muscle contraction. The sequence is that of Protein phosphatase 1 regulatory subunit 14A (Ppp1r14a) from Mus musculus (Mouse).